Here is a 216-residue protein sequence, read N- to C-terminus: Protein-L-isoaspartate O-methyltransferase (216 aa).

Ser-64 is an active-site residue.

This sequence belongs to the methyltransferase superfamily. L-isoaspartyl/D-aspartyl protein methyltransferase family.

The protein resides in the cytoplasm. The enzyme catalyses [protein]-L-isoaspartate + S-adenosyl-L-methionine = [protein]-L-isoaspartate alpha-methyl ester + S-adenosyl-L-homocysteine. Functionally, catalyzes the methyl esterification of L-isoaspartyl residues in peptides and proteins that result from spontaneous decomposition of normal L-aspartyl and L-asparaginyl residues. It plays a role in the repair and/or degradation of damaged proteins. In Paracoccus denitrificans (strain Pd 1222), this protein is Protein-L-isoaspartate O-methyltransferase.